The primary structure comprises 156 residues: Snaclec jerdonibitin subunit alpha (156 aa).

A signal peptide spans 1–23 (MGRFIFVSFGLLVVFLSLSGTGA). 3 disulfides stabilise this stretch: C25–C36, C53–C150, and C125–C142. Positions 32–151 (FRQYCYRVFK…CGQQHLFMCK (120 aa)) constitute a C-type lectin domain.

The protein belongs to the snaclec family. As to quaternary structure, heterodimer of subunits alpha and beta; disulfide-linked. In terms of tissue distribution, expressed by the venom gland.

The protein resides in the secreted. Functionally, snaclec that dose-dependently inhibits platelet aggregation induced by ristocetin or low-dose thrombin, but not by high-dose thrombin. Binds to GPIbalpha (GP1BA). In vivo, also dose-dependently induces thrombocytopenia of mice and platelet counts remains at very low level even after 18 hours intravenous injection. This chain is Snaclec jerdonibitin subunit alpha, found in Protobothrops jerdonii (Jerdon's pitviper).